A 344-amino-acid chain; its full sequence is Phenylalanine--tRNA ligase alpha subunit (344 aa).

E261 lines the Mg(2+) pocket.

Belongs to the class-II aminoacyl-tRNA synthetase family. Phe-tRNA synthetase alpha subunit type 1 subfamily. In terms of assembly, tetramer of two alpha and two beta subunits. It depends on Mg(2+) as a cofactor.

The protein resides in the cytoplasm. The catalysed reaction is tRNA(Phe) + L-phenylalanine + ATP = L-phenylalanyl-tRNA(Phe) + AMP + diphosphate + H(+). This Ehrlichia ruminantium (strain Gardel) protein is Phenylalanine--tRNA ligase alpha subunit.